A 157-amino-acid polypeptide reads, in one-letter code: Large ribosomal subunit protein uL11 (157 aa).

It belongs to the universal ribosomal protein uL11 family. In terms of assembly, part of the ribosomal stalk of the 50S ribosomal subunit. Interacts with L10 and the large rRNA to form the base of the stalk. L10 forms an elongated spine to which L12 dimers bind in a sequential fashion forming a multimeric L10(L12)X complex.

Forms part of the ribosomal stalk which helps the ribosome interact with GTP-bound translation factors. The sequence is that of Large ribosomal subunit protein uL11 from Archaeoglobus fulgidus (strain ATCC 49558 / DSM 4304 / JCM 9628 / NBRC 100126 / VC-16).